The primary structure comprises 271 residues: Peroxiredoxin-4 (271 aa).

The first 37 residues, 1–37 (MEALPLLAATTPDHGRHRRLLLLPLLLFLLPAGAVQG), serve as a signal peptide directing secretion. One can recognise a Thioredoxin domain in the interval 79–237 (AKISKPAPYW…TLRLVQAFQY (159 aa)). Residue Cys-124 is the Cysteine sulfenic acid (-SOH) intermediate of the active site.

It belongs to the peroxiredoxin family. AhpC/Prx1 subfamily. Homodimer; disulfide-linked, upon oxidation. 5 homodimers assemble to form a ring-like decamer. Can form heterodimers with PRDX1. In terms of processing, the enzyme can be inactivated by further oxidation of the cysteine sulfenic acid (C(P)-SOH) to sulphinic acid (C(P)-SO2H) and sulphonic acid (C(P)-SO3H) instead of its condensation to a disulfide bond.

The protein resides in the cytoplasm. The protein localises to the endoplasmic reticulum. The enzyme catalyses a hydroperoxide + [thioredoxin]-dithiol = an alcohol + [thioredoxin]-disulfide + H2O. Its function is as follows. Thiol-specific peroxidase that catalyzes the reduction of hydrogen peroxide and organic hydroperoxides to water and alcohols, respectively. Plays a role in cell protection against oxidative stress by detoxifying peroxides and as sensor of hydrogen peroxide-mediated signaling events. Regulates the activation of NF-kappa-B in the cytosol by a modulation of I-kappa-B-alpha phosphorylation. The chain is Peroxiredoxin-4 (PRDX4) from Homo sapiens (Human).